The primary structure comprises 239 residues: LexA repressor (239 aa).

Positions 26-46 (FDEMKDALDLASKSGIHRLIT) form a DNA-binding region, H-T-H motif. Residues serine 159 and lysine 197 each act as for autocatalytic cleavage activity in the active site.

It belongs to the peptidase S24 family. In terms of assembly, homodimer.

The enzyme catalyses Hydrolysis of Ala-|-Gly bond in repressor LexA.. Functionally, represses a number of genes involved in the response to DNA damage (SOS response), including recA and lexA. In the presence of single-stranded DNA, RecA interacts with LexA causing an autocatalytic cleavage which disrupts the DNA-binding part of LexA, leading to derepression of the SOS regulon and eventually DNA repair. This chain is LexA repressor, found in Allorhizobium ampelinum (strain ATCC BAA-846 / DSM 112012 / S4) (Agrobacterium vitis (strain S4)).